The chain runs to 51 residues: Large ribosomal subunit protein bL33 (51 aa).

Belongs to the bacterial ribosomal protein bL33 family.

The chain is Large ribosomal subunit protein bL33 from Acinetobacter baylyi (strain ATCC 33305 / BD413 / ADP1).